A 53-amino-acid chain; its full sequence is ComX pheromone (53 aa).

A propeptide spanning residues 1–46 (MQEMVGYLIKYPNVLREVMEGNACLLGVDKDQSECIINGFKGLEIY) is cleaved from the precursor. Residue W51 is the site of 3'-geranyl-2',N2-cyclotryptophan attachment.

As to quaternary structure, interacts directly with the sensor histidine kinase ComP and stimulates its activity. In terms of processing, trp-51 is modified by geranylation, which is essential for activity. Modified by the tryptophan prenyltransferase ComQ before export to the extracellular environment. The type of isoprenyl derivative differs among the different pherotypes and depends on ComX primary sequence.

The protein localises to the secreted. Functionally, part of a major quorum-sensing system that regulates the development of genetic competence. Acts through the activation of the two-component regulatory system ComP/ComA composed of a sensor histidine kinase, ComP, and a response regulator, ComA. In Bacillus mojavensis, this protein is ComX pheromone.